Reading from the N-terminus, the 155-residue chain is uncharacterized protein (155 aa).

The SCP domain maps to I37 to N140.

This is an uncharacterized protein from Borreliella burgdorferi (strain ATCC 35210 / DSM 4680 / CIP 102532 / B31) (Borrelia burgdorferi).